The sequence spans 153 residues: NAD(P)H-quinone oxidoreductase subunit N (153 aa).

Belongs to the complex I NdhN subunit family. NDH-1 can be composed of about 15 different subunits; different subcomplexes with different compositions have been identified which probably have different functions.

The protein localises to the cellular thylakoid membrane. It carries out the reaction a plastoquinone + NADH + (n+1) H(+)(in) = a plastoquinol + NAD(+) + n H(+)(out). It catalyses the reaction a plastoquinone + NADPH + (n+1) H(+)(in) = a plastoquinol + NADP(+) + n H(+)(out). In terms of biological role, NDH-1 shuttles electrons from an unknown electron donor, via FMN and iron-sulfur (Fe-S) centers, to quinones in the respiratory and/or the photosynthetic chain. The immediate electron acceptor for the enzyme in this species is believed to be plastoquinone. Couples the redox reaction to proton translocation, and thus conserves the redox energy in a proton gradient. Cyanobacterial NDH-1 also plays a role in inorganic carbon-concentration. The chain is NAD(P)H-quinone oxidoreductase subunit N from Synechococcus sp. (strain RCC307).